Here is a 187-residue protein sequence, read N- to C-terminus: Nuclear transcription factor Y subunit C-8 (187 aa).

The interval 163–187 (WPGAWTSVSGEEEEARGKKGGDDGN) is disordered. Positions 177-187 (ARGKKGGDDGN) are enriched in basic and acidic residues.

It belongs to the NFYC/HAP5 subunit family. Heterotrimeric transcription factor composed of three components, NF-YA, NF-YB and NF-YC. NF-YB and NF-YC must interact and dimerize for NF-YA association and DNA binding. In terms of tissue distribution, expressed in flowers and siliques.

The protein resides in the nucleus. Stimulates the transcription of various genes by recognizing and binding to a CCAAT motif in promoters. The chain is Nuclear transcription factor Y subunit C-8 (NFYC8) from Arabidopsis thaliana (Mouse-ear cress).